The following is a 1420-amino-acid chain: Putative mediator of RNA polymerase II transcription subunit 14 (1420 aa).

The stretch at 1–43 (MDQNQQQQQQQQQQQQQQQQQQQQQQQQQQQQQQQQQQQQQQQ) forms a coiled coil. Composition is skewed to low complexity over residues 1 to 43 (MDQN…QQQQ) and 449 to 474 (TTSS…NNNN). 4 disordered regions span residues 1-59 (MDQN…TTPI), 449-490 (TTSS…NPLS), 750-799 (QQDI…GYKN), and 1389-1420 (QQQQ…SSIR). Polar residues predominate over residues 475 to 490 (GKPNLLSTKQSNNPLS). Low complexity-rich tracts occupy residues 755–795 (NNNN…NGNN) and 1389–1406 (QQQQ…QQQQ). A coiled-coil region spans residues 1382-1412 (LLIQQQQQQQQQQQQQQQQQQQQQQIENNNF). Residues 1407 to 1420 (IENNNFASASSSIR) are compositionally biased toward polar residues.

It belongs to the Mediator complex subunit 14 family. In terms of assembly, component of the Mediator complex.

It is found in the nucleus. Its function is as follows. Component of the Mediator complex, a coactivator involved in the regulated transcription of nearly all RNA polymerase II-dependent genes. Mediator functions as a bridge to convey information from gene-specific regulatory proteins to the basal RNA polymerase II transcription machinery. Mediator is recruited to promoters by direct interactions with regulatory proteins and serves as a scaffold for the assembly of a functional preinitiation complex with RNA polymerase II and the general transcription factors. In Dictyostelium discoideum (Social amoeba), this protein is Putative mediator of RNA polymerase II transcription subunit 14 (med14).